The sequence spans 250 residues: tRNA (guanine-N(1)-)-methyltransferase (250 aa).

S-adenosyl-L-methionine contacts are provided by residues Gly116 and 136 to 141; that span reads IGDYVL.

This sequence belongs to the RNA methyltransferase TrmD family. In terms of assembly, homodimer.

It localises to the cytoplasm. It catalyses the reaction guanosine(37) in tRNA + S-adenosyl-L-methionine = N(1)-methylguanosine(37) in tRNA + S-adenosyl-L-homocysteine + H(+). Its function is as follows. Specifically methylates guanosine-37 in various tRNAs. The sequence is that of tRNA (guanine-N(1)-)-methyltransferase from Pseudomonas fluorescens (strain ATCC BAA-477 / NRRL B-23932 / Pf-5).